The chain runs to 40 residues: Photosystem II reaction center protein J (40 aa).

A helical membrane pass occupies residues 8-28 (IPLWVIGTVAGILVIGLIGIF).

The protein belongs to the PsbJ family. In terms of assembly, PSII is composed of 1 copy each of membrane proteins PsbA, PsbB, PsbC, PsbD, PsbE, PsbF, PsbH, PsbI, PsbJ, PsbK, PsbL, PsbM, PsbT, PsbX, PsbY, PsbZ, Psb30/Ycf12, at least 3 peripheral proteins of the oxygen-evolving complex and a large number of cofactors. It forms dimeric complexes.

Its subcellular location is the plastid. It is found in the chloroplast thylakoid membrane. In terms of biological role, one of the components of the core complex of photosystem II (PSII). PSII is a light-driven water:plastoquinone oxidoreductase that uses light energy to abstract electrons from H(2)O, generating O(2) and a proton gradient subsequently used for ATP formation. It consists of a core antenna complex that captures photons, and an electron transfer chain that converts photonic excitation into a charge separation. This is Photosystem II reaction center protein J from Lepidium virginicum (Virginia pepperweed).